The chain runs to 42 residues: Photosystem I reaction center subunit IX (42 aa).

The chain crosses the membrane as a helical span at residues 7–27 (YLSTAPVLATLWFGFLAGLLI).

It belongs to the PsaJ family.

Its subcellular location is the plastid. It localises to the chloroplast thylakoid membrane. In terms of biological role, may help in the organization of the PsaE and PsaF subunits. The sequence is that of Photosystem I reaction center subunit IX from Huperzia lucidula (Shining clubmoss).